We begin with the raw amino-acid sequence, 402 residues long: Flavohemoprotein (402 aa).

In terms of domain architecture, Globin spans 1–136 (MLSEKTIEIV…IADAFISIEA (136 aa)). A heme b-binding site is contributed by His85. Catalysis depends on charge relay system residues Tyr95 and Glu135. Positions 147–402 (GGWKDFRNFV…EFFGPAASLQ (256 aa)) are reductase. One can recognise an FAD-binding FR-type domain in the interval 150–260 (KDFRNFVVVK…SAPAGDFVLN (111 aa)). FAD is bound by residues Tyr188 and 204 to 207 (RQYS). 273–278 (GVGITP) is an NADP(+) binding site. Residue 394 to 397 (FFGP) coordinates FAD.

Belongs to the globin family. Two-domain flavohemoproteins subfamily. It in the C-terminal section; belongs to the flavoprotein pyridine nucleotide cytochrome reductase family. It depends on heme b as a cofactor. FAD serves as cofactor.

The enzyme catalyses 2 nitric oxide + NADPH + 2 O2 = 2 nitrate + NADP(+) + H(+). It carries out the reaction 2 nitric oxide + NADH + 2 O2 = 2 nitrate + NAD(+) + H(+). Functionally, is involved in NO detoxification in an aerobic process, termed nitric oxide dioxygenase (NOD) reaction that utilizes O(2) and NAD(P)H to convert NO to nitrate, which protects the bacterium from various noxious nitrogen compounds. Therefore, plays a central role in the inducible response to nitrosative stress. The protein is Flavohemoprotein of Bacillus cereus (strain ATCC 10987 / NRS 248).